The sequence spans 580 residues: Alpha-thujene synthase TPS3, chloroplastic (580 aa).

Residues 1 to 26 constitute a chloroplast transit peptide; that stretch reads MALQLLTPSFSFQHSPSPHRLTTLRY. (2E)-geranyl diphosphate is bound by residues Arg296, Asp333, Asp337, Arg473, and Asp476. Mg(2+)-binding residues include Asp333 and Asp337. The short motif at 333–337 is the DDXXD motif element; sequence DDVYD. Residues Asp476, Thr480, and Glu484 each contribute to the Mg(2+) site.

This sequence belongs to the terpene synthase family. Tpsb subfamily. Monomer. Mg(2+) serves as cofactor. Requires Mn(2+) as cofactor. Mostly expressed in developing and mature fruits, and, to a lower extent, in male leaves. Barely detectable in female leaves and shoots.

The protein resides in the plastid. Its subcellular location is the chloroplast. The enzyme catalyses (2E)-geranyl diphosphate = alpha-thujene + diphosphate. It catalyses the reaction (2E)-geranyl diphosphate = (1R,5R)-sabinene + diphosphate. It functions in the pathway secondary metabolite biosynthesis; terpenoid biosynthesis. Monoterpene synthase (TPS) involved in the biosynthesis of monoterpene natural products used by traditional Chinese medicine to treat headache, inflammation and intoxication. Catalyzes the conversion of (2E)-geranyl diphosphate (GPP) into alpha-thujene and (1R,5R)-sabinene. This Litsea cubeba (Aromatic litsea) protein is Alpha-thujene synthase TPS3, chloroplastic.